We begin with the raw amino-acid sequence, 315 residues long: PDZ domain-containing protein GIPC2 (315 aa).

The span at 1–12 (MPLKLRGKKKAK) shows a compositional bias: basic residues. A disordered region spans residues 1–34 (MPLKLRGKKKAKSKETAGLVEGEPTGAGGGSLSA). Positions 117–197 (EVNVYKSEDS…EELFTMKLIE (81 aa)) constitute a PDZ domain.

It belongs to the GIPC family. In terms of assembly, probably interacts with SEMA5A. Expressed at highest levels in ascending colon and at moderate levels in adult kidney. Expressed at low levels in adult pancreas and at very low levels in adult liver. Expression is down-regulated in several primary tumors, such as kidney, colon and rectal tumors.

It localises to the cytoplasm. This chain is PDZ domain-containing protein GIPC2 (GIPC2), found in Homo sapiens (Human).